The sequence spans 117 residues: Large ribosomal subunit protein uL18 (117 aa).

The protein belongs to the universal ribosomal protein uL18 family. In terms of assembly, part of the 50S ribosomal subunit; part of the 5S rRNA/L5/L18/L25 subcomplex. Contacts the 5S and 23S rRNAs.

Its function is as follows. This is one of the proteins that bind and probably mediate the attachment of the 5S RNA into the large ribosomal subunit, where it forms part of the central protuberance. The sequence is that of Large ribosomal subunit protein uL18 from Chromobacterium violaceum (strain ATCC 12472 / DSM 30191 / JCM 1249 / CCUG 213 / NBRC 12614 / NCIMB 9131 / NCTC 9757 / MK).